We begin with the raw amino-acid sequence, 249 residues long: Homeobox protein TGIF2LX (249 aa).

A compositionally biased stretch (basic and acidic residues) spans 1 to 27; the sequence is MEAAADRPAETRSRVEKDSRRAKKDSP. 2 disordered regions span residues 1–60 and 121–215; these read MEAA…KKKR and QRRG…EPVS. Residues 28–46 show a composition bias toward polar residues; the sequence is AKTQSPAQDTSIMLRSNAD. The homeobox; TALE-type DNA-binding region spans 55–118; that stretch reads EHKKKRKGYL…INARRRILPD (64 aa). The span at 159–172 shows a compositional bias: polar residues; that stretch reads DNVQSLPLRSSPKG. A compositionally biased stretch (low complexity) spans 202–215; the sequence is VSNITSSSSPEPVS.

It belongs to the TALE/TGIF homeobox family.

It is found in the nucleus. May have a transcription role in testis. This chain is Homeobox protein TGIF2LX (TGIF2LX), found in Miopithecus talapoin (Angolan talapoin).